The primary structure comprises 896 residues: Androgen receptor (896 aa).

The modulating stretch occupies residues M1–K534. Residues M1–A563 are interaction with ZNF318. Disordered stretches follow at residues Q35–L152 and L178–G218. Positions L54–E78 are enriched in low complexity. S65 is modified (phosphoserine; by CDK9). S81 carries the phosphoserine modification. The segment covering L178–Q189 has biased composition (low complexity). Positions E190 to G199 are enriched in polar residues. Y215 bears the Phosphotyrosine; by CSK mark. S248 bears the Phosphoserine mark. Phosphotyrosine; by CSK and TNK2 is present on Y259. Phosphotyrosine; by CSK occurs at positions 299, 338, 349, and 354. Y355 carries the post-translational modification Phosphotyrosine; by CSK and TNK2. K378 participates in a covalent cross-link: Glycyl lysine isopeptide (Lys-Gly) (interchain with G-Cter in SUMO). Y385 is modified (phosphotyrosine; by CSK). K497 is covalently cross-linked (Glycyl lysine isopeptide (Lys-Gly) (interchain with G-Cter in SUMO)). Y511 and Y528 each carry phosphotyrosine; by CSK. The segment at Y528 to T895 is interaction with LPXN. Residues T535–L608 constitute a DNA-binding region (nuclear receptor). NR C4-type zinc fingers lie at residues C536 to C556 and C572 to C596. The interval Y548 to V638 is interaction with HIPK3. The segment at Q568 to T895 is interaction with CCAR1. Residues M601–T895 form an interaction with KAT7 region. S627 carries the phosphoserine; by STK4/MST1 modification. In terms of domain architecture, NR LBD spans E645–I876. 17beta-hydroxy-5alpha-androstan-3-one-binding residues include N682 and R729. Residues K822 and K824 each participate in a glycyl lysine isopeptide (Lys-Gly) (interchain with G-Cter in ubiquitin) cross-link. Residue T854 coordinates 17beta-hydroxy-5alpha-androstan-3-one. Position 892 is a phosphotyrosine; by CSK (Y892).

Belongs to the nuclear hormone receptor family. NR3 subfamily. In terms of assembly, binds DNA as a homodimer. Part of a ternary complex containing AR, EFCAB6/DJBP and PARK7. Interacts with HIPK3 and NR0B2 in the presence of androgen. The ligand binding domain interacts with KAT7/HBO1 in the presence of dihydrotestosterone. Interacts with EFCAB6/DJBP, PQBP1, RANBP9, RBAK, SPDEF, SRA1, TGFB1I1 and RREB1. Interacts with ZMIZ1/ZIMP10 and ZMIZ2/ZMIP7 which both enhance its transactivation activity. Interacts with SLC30A9 and RAD54L2/ARIP4. Interacts with MACROD1 (via macro domain). Interacts via the ligand-binding domain with LXXLL and FXXLF motifs from NCOA1, NCOA2, NCOA3 and MAGEA11. Interacts (via nuclear receptor DNA binding domain and nuclear receptor ligand binding domain) with NCOA4. The AR N-terminal poly-Gln region binds Ran resulting in enhancement of AR-mediated transactivation. Ran-binding decreases as the poly-Gln length increases. Interacts with HIP1 (via coiled coil domain). Interacts (via ligand-binding domain) with TRIM68. Interacts with TNK2. Interacts with USP26. Interacts with RNF6. Interacts (regulated by RNF6 probably through polyubiquitination) with RNF14; regulates AR transcriptional activity. Interacts with PRMT2 and TRIM24. Interacts with RACK1. Interacts with RANBP10; this interaction enhances dihydrotestosterone-induced AR transcriptional activity. Interacts with PRPF6 in a hormone-independent way; this interaction enhances dihydrotestosterone-induced AR transcriptional activity. Interacts with STK4/MST1. Interacts with ZIPK/DAPK3. Interacts with LPXN. Interacts with MAK. Part of a complex containing AR, MAK and NCOA3. Interacts with CRY1. Interacts with CCAR1 and GATA2. Interacts with ZNF318. Interacts with BUD31. Interacts with ARID4A. Interacts with ARID4B. Interacts (via NR LBD domain) with ZBTB7A; the interaction is direct and androgen-dependent. Interacts with NCOR1. Interacts with NCOR2. Interacts with CRY2 in a ligand-dependent manner. Phosphorylated in prostate cancer cells in response to several growth factors including EGF. Phosphorylation is induced by c-Src kinase (CSK). Tyr-511 is one of the major phosphorylation sites and an increase in phosphorylation and Src kinase activity is associated with prostate cancer progression. Phosphorylation by TNK2 enhances the DNA-binding and transcriptional activity. Phosphorylation at Ser-65 by CDK9 regulates AR promoter selectivity and cell growth. In terms of processing, sumoylated on Lys-378 (major) and Lys-497. Ubiquitinated. Deubiquitinated by USP26. 'Lys-6' and 'Lys-27'-linked polyubiquitination by RNF6 modulates AR transcriptional activity and specificity. Post-translationally, palmitoylated by ZDHHC7 and ZDHHC21. Palmitoylation is required for plasma membrane targeting and for rapid intracellular signaling via ERK and AKT kinases and cAMP generation.

It localises to the nucleus. The protein localises to the cytoplasm. Its function is as follows. Steroid hormone receptors are ligand-activated transcription factors that regulate eukaryotic gene expression and affect cellular proliferation and differentiation in target tissues. Transcription factor activity is modulated by bound coactivator and corepressor proteins like ZBTB7A that recruits NCOR1 and NCOR2 to the androgen response elements/ARE on target genes, negatively regulating androgen receptor signaling and androgen-induced cell proliferation. Transcription activation is also down-regulated by NR0B2. Activated, but not phosphorylated, by HIPK3 and ZIPK/DAPK3. This chain is Androgen receptor (AR), found in Sus scrofa (Pig).